A 938-amino-acid polypeptide reads, in one-letter code: Bifunctional glutamine synthetase adenylyltransferase/adenylyl-removing enzyme (938 aa).

The segment at 1–457 is adenylyl removase; the sequence is MLEADAARLK…HFDHVFGDPS (457 aa). Residues 460–938 form an adenylyl transferase region; that stretch reads AHTLDSMWAA…ALWTIVFGSA (479 aa).

It belongs to the GlnE family. It depends on Mg(2+) as a cofactor.

The enzyme catalyses [glutamine synthetase]-O(4)-(5'-adenylyl)-L-tyrosine + phosphate = [glutamine synthetase]-L-tyrosine + ADP. The catalysed reaction is [glutamine synthetase]-L-tyrosine + ATP = [glutamine synthetase]-O(4)-(5'-adenylyl)-L-tyrosine + diphosphate. Its function is as follows. Involved in the regulation of glutamine synthetase GlnA, a key enzyme in the process to assimilate ammonia. When cellular nitrogen levels are high, the C-terminal adenylyl transferase (AT) inactivates GlnA by covalent transfer of an adenylyl group from ATP to specific tyrosine residue of GlnA, thus reducing its activity. Conversely, when nitrogen levels are low, the N-terminal adenylyl removase (AR) activates GlnA by removing the adenylyl group by phosphorolysis, increasing its activity. The regulatory region of GlnE binds the signal transduction protein PII (GlnB) which indicates the nitrogen status of the cell. This chain is Bifunctional glutamine synthetase adenylyltransferase/adenylyl-removing enzyme, found in Aromatoleum aromaticum (strain DSM 19018 / LMG 30748 / EbN1) (Azoarcus sp. (strain EbN1)).